The following is a 504-amino-acid chain: Ectoine/proline transporter ProP (504 aa).

11 helical membrane-spanning segments follow: residues 41 to 61 (FMEWYDFGIYGYLTVTMTAVF), 71 to 91 (LLAVMFGFAVSYLVRPLGGLV), 118 to 138 (LIGLLPTAASIGAWALVLLYL), 169 to 189 (FFGAFLDMGSYLGFAAGASVV), 207 to 227 (DFGWRIPFLTAIPLGIIAVYL), 272 to 292 (LLIGIAIVAATNTAGYALTSY), 309 to 329 (AAVTVPILVVMSLLLPFVGMW), 337 to 357 (PVYATAVAATLILMVPAFLIM), 362 to 382 (IGAVLIALSMVAIPTGLYVAL), 399 to 419 (GMGISYNISVSLFGGTTPLIT), and 430 to 450 (IVPALYIMFFSAIAGVALLFM). The tract at residues 477-504 (NQDEDPNIDLSHMPFPDEENVGAEKQNA) is disordered.

The protein belongs to the major facilitator superfamily.

It localises to the cell membrane. Its activity is regulated as follows. Uptake is activated by osmotic stress. Inhibited by CCCP. Involved in the uptake of osmoprotectants. Can transport ectoine and proline. Protons are probably the coupling ions. The chain is Ectoine/proline transporter ProP from Corynebacterium glutamicum (strain ATCC 13032 / DSM 20300 / JCM 1318 / BCRC 11384 / CCUG 27702 / LMG 3730 / NBRC 12168 / NCIMB 10025 / NRRL B-2784 / 534).